The primary structure comprises 418 residues: Glutamyl-tRNA reductase (418 aa).

Substrate-binding positions include T49–R52, S109, E114–Q116, and Q120. C50 acts as the Nucleophile in catalysis. G189–I194 serves as a coordination point for NADP(+).

It belongs to the glutamyl-tRNA reductase family. Homodimer.

It carries out the reaction (S)-4-amino-5-oxopentanoate + tRNA(Glu) + NADP(+) = L-glutamyl-tRNA(Glu) + NADPH + H(+). It participates in porphyrin-containing compound metabolism; protoporphyrin-IX biosynthesis; 5-aminolevulinate from L-glutamyl-tRNA(Glu): step 1/2. In terms of biological role, catalyzes the NADPH-dependent reduction of glutamyl-tRNA(Glu) to glutamate 1-semialdehyde (GSA). The sequence is that of Glutamyl-tRNA reductase from Pectobacterium atrosepticum (strain SCRI 1043 / ATCC BAA-672) (Erwinia carotovora subsp. atroseptica).